The following is a 200-amino-acid chain: Lipopolysaccharide core heptose(II)-phosphate phosphatase (200 aa).

Residues 1-25 (MLAFCRSSLKSKKYFIILLALAAIA) form the signal peptide.

Belongs to the phosphoglycerate mutase family. Ais subfamily.

It is found in the periplasm. The protein operates within bacterial outer membrane biogenesis; lipopolysaccharide metabolism. Its function is as follows. Catalyzes the dephosphorylation of heptose(II) of the outer membrane lipopolysaccharide core. This is Lipopolysaccharide core heptose(II)-phosphate phosphatase from Escherichia coli O9:H4 (strain HS).